The chain runs to 65 residues: NSAHPCCDPVTCKPKRGEHCISGPCCENCKFLTAGTVCLPAWGDFDNDLCTGISSDCPRNPWHKS.

The region spanning 1 to 65 (NSAHPCCDPV…DCPRNPWHKS (65 aa)) is the Disintegrin domain. 4 disulfide bridges follow: cysteine 6–cysteine 29, cysteine 20–cysteine 26, cysteine 25–cysteine 50, and cysteine 38–cysteine 57. The Cell attachment site; atypical (WGD) motif lies at 42-44 (WGD).

Belongs to the disintegrin family. Dimeric disintegrin subfamily. As to quaternary structure, heterodimer with CC8A; disulfide-linked. Expressed by the venom gland.

The protein resides in the secreted. Inhibits integrins alpha-IIb/beta-3 (ITGA2B/ITGB3), alpha-V/beta-3 (ITGAV/ITGB3), and alpha-5/beta-1 (ITGA5/ITGB1). This Cerastes cerastes (Horned desert viper) protein is Disintegrin CC8B.